The following is a 230-amino-acid chain: Heptaprenylglyceryl phosphate synthase (230 aa).

Sn-glycerol 1-phosphate is bound at residue lysine 12. Mg(2+)-binding residues include aspartate 14 and threonine 40. Sn-glycerol 1-phosphate is bound by residues 159–164 (YIEYSG), glycine 189, and 209–210 (GD).

The protein belongs to the GGGP/HepGP synthase family. Group I subfamily. As to quaternary structure, homodimer. The cofactor is Mg(2+).

The catalysed reaction is sn-glycerol 1-phosphate + all-trans-heptaprenyl diphosphate = 3-heptaprenyl-sn-glycero-1-phosphate + diphosphate. It participates in membrane lipid metabolism; glycerophospholipid metabolism. Its function is as follows. Prenyltransferase that catalyzes in vivo the transfer of the heptaprenyl moiety of heptaprenyl pyrophosphate (HepPP; 35 carbon atoms) to the C3 hydroxyl of sn-glycerol-1-phosphate (G1P), producing heptaprenylglyceryl phosphate (HepGP). This reaction is an ether-bond-formation step in the biosynthesis of archaea-type G1P-based membrane lipids found in Bacillales. In Staphylococcus aureus (strain bovine RF122 / ET3-1), this protein is Heptaprenylglyceryl phosphate synthase.